Consider the following 356-residue polypeptide: MRVTDFSFELPESLIAHYPMPERSSCRLLSLDGPTGALTHGTFTDLLDKLNPGDLLVFNNTRVIPARLFGRKASGGKIEVLVERMLDDKRILAHIRASKAPKPGAELLLGDDESINATMTARHGALFEVEFNDQRSVLDILNSIGHMPLPPYIDRPDEDADRELYQTVYSEKPGAVAAPTAGLHFDEPLLEKLRAKGVEMAFVTLHVGAGTFQPVRVDTIEDHIMHSEYAEVPQDVVDAVLAAKARGNRVIAVGTTSVRSLESAAQAAKNDLIEPFFDDTQIFIYPGFQYKVVDALVTNFHLPESTLIMLVSAFAGYQHTMNAYKAAVEEKYRFFSYGDAMFITYNPQAINERVGE.

It belongs to the QueA family. As to quaternary structure, monomer.

The protein localises to the cytoplasm. The catalysed reaction is 7-aminomethyl-7-carbaguanosine(34) in tRNA + S-adenosyl-L-methionine = epoxyqueuosine(34) in tRNA + adenine + L-methionine + 2 H(+). It participates in tRNA modification; tRNA-queuosine biosynthesis. In terms of biological role, transfers and isomerizes the ribose moiety from AdoMet to the 7-aminomethyl group of 7-deazaguanine (preQ1-tRNA) to give epoxyqueuosine (oQ-tRNA). The chain is S-adenosylmethionine:tRNA ribosyltransferase-isomerase from Escherichia coli O6:K15:H31 (strain 536 / UPEC).